Reading from the N-terminus, the 396-residue chain is Probable sugar efflux transporter (396 aa).

12 consecutive transmembrane segments (helical) span residues 15-35 (VVTL…PVGL), 50-70 (VGIM…PFML), 81-101 (LICL…SWSF), 103-123 (VLVI…SITA), 136-156 (AQAL…GLPL), 170-190 (FFAI…LLPL), 209-229 (PALM…YTAY), 246-266 (FATA…VIFG), 275-295 (ALVS…LPAA), 299-319 (IHLG…GLGM), 333-353 (VAMA…ALVG), and 364-384 (MIGY…IIIF).

Belongs to the major facilitator superfamily. SotB (TC 2.A.1.2) family.

It is found in the cell inner membrane. Involved in the efflux of sugars. The physiological role may be the reduction of the intracellular concentration of toxic sugars or sugar metabolites. The chain is Probable sugar efflux transporter from Escherichia coli O157:H7 (strain EC4115 / EHEC).